Here is a 693-residue protein sequence, read N- to C-terminus: Histone-lysine N-methyltransferase, H3 lysine-9 specific SUVH7 (693 aa).

Disordered stretches follow at residues 64–99 (WYDG…PPEM) and 111–175 (DSSN…AETE). The a.T hook DNA-binding region spans 129–141 (KRGRGRPKGSKNS). The YDG domain maps to 227 to 373 (GAVPGIHVGD…FKEFRFKLVR (147 aa)). The Pre-SET domain maps to 454–516 (QSLGCQNCRH…HCPTRLVQTG (63 aa)). Zn(2+) contacts are provided by Cys458, Cys461, Cys466, Cys471, Cys473, Cys498, Cys502, Cys504, and Cys508. The 142-residue stretch at 519–660 (LHLEVFKTRN…PMTELTYDYG (142 aa)) folds into the SET domain. Residues 529-531 (CGW), Asp562, Tyr564, Arg614, and 617-618 (NH) each bind S-adenosyl-L-methionine. Residues Cys620, Cys681, Cys683, and Cys688 each contribute to the Zn(2+) site. Positions 677 to 693 (GKKTCLCGSVKCRGSFT) constitute a Post-SET domain.

The protein belongs to the class V-like SAM-binding methyltransferase superfamily. Histone-lysine methyltransferase family. Suvar3-9 subfamily.

It is found in the nucleus. The protein resides in the chromosome. Its subcellular location is the centromere. It catalyses the reaction N(6)-methyl-L-lysyl(9)-[histone H3] + S-adenosyl-L-methionine = N(6),N(6)-dimethyl-L-lysyl(9)-[histone H3] + S-adenosyl-L-homocysteine + H(+). The catalysed reaction is L-lysyl(9)-[histone H3] + S-adenosyl-L-methionine = N(6)-methyl-L-lysyl(9)-[histone H3] + S-adenosyl-L-homocysteine + H(+). Its function is as follows. Histone methyltransferase. Methylates 'Lys-9' of histone H3. H3 'Lys-9' methylation represents a specific tag for epigenetic transcriptional repression. The protein is Histone-lysine N-methyltransferase, H3 lysine-9 specific SUVH7 (SUVH7) of Arabidopsis thaliana (Mouse-ear cress).